A 95-amino-acid chain; its full sequence is Phosphoribosyl-ATP pyrophosphatase (95 aa).

This sequence belongs to the PRA-PH family.

It is found in the cytoplasm. The catalysed reaction is 1-(5-phospho-beta-D-ribosyl)-ATP + H2O = 1-(5-phospho-beta-D-ribosyl)-5'-AMP + diphosphate + H(+). The protein operates within amino-acid biosynthesis; L-histidine biosynthesis; L-histidine from 5-phospho-alpha-D-ribose 1-diphosphate: step 2/9. The polypeptide is Phosphoribosyl-ATP pyrophosphatase (Methanocella arvoryzae (strain DSM 22066 / NBRC 105507 / MRE50)).